The primary structure comprises 246 residues: 3'(2'),5'-bisphosphate nucleotidase CysQ (246 aa).

Positions 64, 83, 85, 86, and 205 each coordinate Mg(2+). E64 is a binding site for substrate. Substrate contacts are provided by residues 85–88 and D205; that span reads LDGT.

Belongs to the inositol monophosphatase superfamily. CysQ family. Requires Mg(2+) as cofactor.

It is found in the cell inner membrane. The enzyme catalyses adenosine 3',5'-bisphosphate + H2O = AMP + phosphate. With respect to regulation, inhibited by lithium and calcium. Functionally, converts adenosine-3',5'-bisphosphate (PAP) to AMP. May also convert adenosine 3'-phosphate 5'-phosphosulfate (PAPS) to adenosine 5'-phosphosulfate (APS). Has 10000-fold lower activity towards inositol 1,4-bisphosphate (Ins(1,4)P2). The chain is 3'(2'),5'-bisphosphate nucleotidase CysQ from Escherichia coli (strain K12).